Consider the following 102-residue polypeptide: MSTQVAEQITFDPDVSWRLHHQVAVRPEPFGALLYHFGTRKLSFLKNRTVVEVVNSLADHPDARSALCAAGVADDQQAPYLHALGVLVQSNMLVPGNPEGSQ.

It belongs to the peptide chaperone MftB family.

Functionally, peptide chaperone involved in the biosynthesis of the enzyme cofactor mycofactocin (MFT). Binds MftA and MftC with high affinity, and is essential for MftC activity on MftA, likely via the formation of a ternary complex. Is required for the in vivo ethanol assimilation in M.smegmatis. This chain is Peptide chaperone MftB, found in Mycolicibacterium smegmatis (strain ATCC 700084 / mc(2)155) (Mycobacterium smegmatis).